The following is a 162-amino-acid chain: Regulator of sigma D (162 aa).

This sequence belongs to the Rsd/AlgQ family. Interacts with RpoD.

It is found in the cytoplasm. In terms of biological role, binds RpoD and negatively regulates RpoD-mediated transcription activation by preventing the interaction between the primary sigma factor RpoD with the catalytic core of the RNA polymerase and with promoter DNA. May be involved in replacement of the RNA polymerase sigma subunit from RpoD to RpoS during the transition from exponential growth to the stationary phase. The polypeptide is Regulator of sigma D (Salmonella agona (strain SL483)).